Here is a 267-residue protein sequence, read N- to C-terminus: Nus factor SuhB (267 aa).

Residues Glu-67, Asp-84, and Leu-86 each contribute to the Mg(2+) site. Glu-67 provides a ligand contact to substrate. Substrate-binding positions include 86-89 (LDGT), Arg-183, and Asp-212.

Belongs to the inositol monophosphatase superfamily. Homodimer. The rRNA transcription and antitermination complex (rrnTAC) consists of RNA polymerase (RNAP), NusA, NusB, NusE (rpsJ), NusG, SubB, ribosomal protein S4, DNA and precursor rRNA; S4 is more flexible than other subunits. Mg(2+) is required as a cofactor.

It is found in the cytoplasm. It catalyses the reaction a myo-inositol phosphate + H2O = myo-inositol + phosphate. In terms of biological role, part of the processive rRNA transcription and antitermination complex (rrnTAC). The complex forms an RNA-chaperone ring around the RNA exit tunnel of RNA polymerase (RNAP). It supports rapid transcription and antitermination of rRNA operons, cotranscriptional rRNA folding, and annealing of distal rRNA regions to allow correct ribosome biogenesis. This subunit may play a central role in organizing the structure. IMPase activity is not required for its Nus factor function. The sequence is that of Nus factor SuhB (suhB) from Escherichia coli O157:H7.